A 476-amino-acid polypeptide reads, in one-letter code: WD repeat, SAM and U-box domain-containing protein 1 (476 aa).

WD repeat units follow at residues D10–H47, F52–V91, P95–C134, V137–E176, A178–E228, G237–T276, and Q279–A318. The 65-residue stretch at W332–K396 folds into the SAM domain. The U-box domain occupies G403–K476. Phosphothreonine is present on T458.

In Homo sapiens (Human), this protein is WD repeat, SAM and U-box domain-containing protein 1 (WDSUB1).